A 317-amino-acid polypeptide reads, in one-letter code: Ornithine carbamoyltransferase (317 aa).

Residues 54-57 (STRT), Q81, R105, and 132-135 (HPCQ) contribute to the carbamoyl phosphate site. L-ornithine contacts are provided by residues N163, D227, and 231-232 (SM). Carbamoyl phosphate contacts are provided by residues 267-268 (CL) and R295.

It belongs to the aspartate/ornithine carbamoyltransferase superfamily. OTCase family.

It is found in the cytoplasm. It catalyses the reaction carbamoyl phosphate + L-ornithine = L-citrulline + phosphate + H(+). The protein operates within amino-acid biosynthesis; L-arginine biosynthesis; L-arginine from L-ornithine and carbamoyl phosphate: step 1/3. Its function is as follows. Reversibly catalyzes the transfer of the carbamoyl group from carbamoyl phosphate (CP) to the N(epsilon) atom of ornithine (ORN) to produce L-citrulline. The chain is Ornithine carbamoyltransferase from Parafrankia sp. (strain EAN1pec).